The sequence spans 157 residues: Ribosomal RNA large subunit methyltransferase H (157 aa).

Residues glycine 104 and 123-128 (LSSLTL) each bind S-adenosyl-L-methionine.

It belongs to the RNA methyltransferase RlmH family. In terms of assembly, homodimer.

The protein resides in the cytoplasm. It carries out the reaction pseudouridine(1915) in 23S rRNA + S-adenosyl-L-methionine = N(3)-methylpseudouridine(1915) in 23S rRNA + S-adenosyl-L-homocysteine + H(+). Functionally, specifically methylates the pseudouridine at position 1915 (m3Psi1915) in 23S rRNA. The sequence is that of Ribosomal RNA large subunit methyltransferase H from Nitrosococcus oceani (strain ATCC 19707 / BCRC 17464 / JCM 30415 / NCIMB 11848 / C-107).